A 264-amino-acid chain; its full sequence is tRNA (guanine-N(1)-)-methyltransferase (264 aa).

Residues Gly125 and 145 to 150 contribute to the S-adenosyl-L-methionine site; that span reads LGDFVL.

This sequence belongs to the RNA methyltransferase TrmD family. Homodimer.

It is found in the cytoplasm. The enzyme catalyses guanosine(37) in tRNA + S-adenosyl-L-methionine = N(1)-methylguanosine(37) in tRNA + S-adenosyl-L-homocysteine + H(+). In terms of biological role, specifically methylates guanosine-37 in various tRNAs. The chain is tRNA (guanine-N(1)-)-methyltransferase from Burkholderia cenocepacia (strain ATCC BAA-245 / DSM 16553 / LMG 16656 / NCTC 13227 / J2315 / CF5610) (Burkholderia cepacia (strain J2315)).